The following is a 430-amino-acid chain: Adenylosuccinate synthetase (430 aa).

Residues 12–18 and 40–42 contribute to the GTP site; these read GDEGKGK and GHT. Catalysis depends on aspartate 13, which acts as the Proton acceptor. Residues aspartate 13 and glycine 40 each contribute to the Mg(2+) site. IMP-binding positions include 13–16, 38–41, threonine 130, arginine 144, glutamine 224, threonine 239, and arginine 303; these read DEGK and NAGH. Histidine 41 serves as the catalytic Proton donor. 299–305 serves as a coordination point for substrate; sequence TVTGRKR. Residues arginine 305, 331–333, and 413–415 each bind GTP; these read KLD and STS.

It belongs to the adenylosuccinate synthetase family. Homodimer. It depends on Mg(2+) as a cofactor.

It is found in the cytoplasm. It catalyses the reaction IMP + L-aspartate + GTP = N(6)-(1,2-dicarboxyethyl)-AMP + GDP + phosphate + 2 H(+). Its pathway is purine metabolism; AMP biosynthesis via de novo pathway; AMP from IMP: step 1/2. Plays an important role in the de novo pathway of purine nucleotide biosynthesis. Catalyzes the first committed step in the biosynthesis of AMP from IMP. The sequence is that of Adenylosuccinate synthetase from Cereibacter sphaeroides (strain ATCC 17023 / DSM 158 / JCM 6121 / CCUG 31486 / LMG 2827 / NBRC 12203 / NCIMB 8253 / ATH 2.4.1.) (Rhodobacter sphaeroides).